The following is a 502-amino-acid chain: Probable cytochrome P450 313b1 (502 aa).

Residue Cys-449 coordinates heme.

Belongs to the cytochrome P450 family. Heme is required as a cofactor.

The protein resides in the endoplasmic reticulum membrane. It localises to the microsome membrane. May be involved in the metabolism of insect hormones and in the breakdown of synthetic insecticides. The protein is Probable cytochrome P450 313b1 (Cyp313b1) of Drosophila melanogaster (Fruit fly).